Here is a 126-residue protein sequence, read N- to C-terminus: Holo-[acyl-carrier-protein] synthase (126 aa).

Positions 9 and 58 each coordinate Mg(2+).

The protein belongs to the P-Pant transferase superfamily. AcpS family. Requires Mg(2+) as cofactor.

Its subcellular location is the cytoplasm. The catalysed reaction is apo-[ACP] + CoA = holo-[ACP] + adenosine 3',5'-bisphosphate + H(+). Transfers the 4'-phosphopantetheine moiety from coenzyme A to a Ser of acyl-carrier-protein. This chain is Holo-[acyl-carrier-protein] synthase, found in Salmonella agona (strain SL483).